Reading from the N-terminus, the 544-residue chain is CTP synthase (544 aa).

Residues 1–265 (MTKFIFVTGG…DNIITEQLQL (265 aa)) form an amidoligase domain region. S13 contributes to the CTP binding site. Residue S13 participates in UTP binding. Residues 14-19 (SLGKGI) and D71 each bind ATP. 2 residues coordinate Mg(2+): D71 and E139. CTP is bound by residues 146 to 148 (DIE), 186 to 191 (KTKPTQ), and K222. UTP contacts are provided by residues 186 to 191 (KTKPTQ) and K222. A Glutamine amidotransferase type-1 domain is found at 290–544 (KIAMVGKYVD…VKAALNNKKA (255 aa)). G353 contributes to the L-glutamine binding site. The active-site Nucleophile; for glutamine hydrolysis is the C380. L-glutamine contacts are provided by residues 381-384 (LGMQ), E404, and R471. Active-site residues include H517 and E519.

The protein belongs to the CTP synthase family. As to quaternary structure, homotetramer.

The enzyme catalyses UTP + L-glutamine + ATP + H2O = CTP + L-glutamate + ADP + phosphate + 2 H(+). It catalyses the reaction L-glutamine + H2O = L-glutamate + NH4(+). The catalysed reaction is UTP + NH4(+) + ATP = CTP + ADP + phosphate + 2 H(+). It functions in the pathway pyrimidine metabolism; CTP biosynthesis via de novo pathway; CTP from UDP: step 2/2. Its activity is regulated as follows. Allosterically activated by GTP, when glutamine is the substrate; GTP has no effect on the reaction when ammonia is the substrate. The allosteric effector GTP functions by stabilizing the protein conformation that binds the tetrahedral intermediate(s) formed during glutamine hydrolysis. Inhibited by the product CTP, via allosteric rather than competitive inhibition. Functionally, catalyzes the ATP-dependent amination of UTP to CTP with either L-glutamine or ammonia as the source of nitrogen. Regulates intracellular CTP levels through interactions with the four ribonucleotide triphosphates. The chain is CTP synthase from Neisseria gonorrhoeae (strain ATCC 700825 / FA 1090).